A 690-amino-acid chain; its full sequence is Eukaryotic translation initiation factor 3 subunit B (690 aa).

Residues 1–11 (MAKKKSEDHSG) show a composition bias toward basic and acidic residues. The interval 1–37 (MAKKKSEDHSGGDANDSDYNEEPNFEDPPNFVDNISD) is disordered. The span at 15–25 (NDSDYNEEPNF) shows a compositional bias: acidic residues. Residues 57 to 141 (SVVVVDNIPK…HTFAVNLFTD (85 aa)) enclose the RRM domain. WD repeat units follow at residues 207 to 246 (TRER…KIQK), 247 to 289 (FPHT…EKRS), 293 to 331 (DGMS…LLDL), 334 to 369 (IKIP…TLME), 442 to 484 (EIRE…KPSL), and 530 to 575 (PDHF…IKRT). Residues 614 to 645 (QKDRLRLTRASKELLEKRSQLRETFMEYRNKR) are a coiled coil.

It belongs to the eIF-3 subunit B family. In terms of assembly, component of the eukaryotic translation initiation factor 3 (eIF-3) complex. The eIF-3 complex interacts with pix. Interacts with mxt.

The protein localises to the cytoplasm. Its function is as follows. RNA-binding component of the eukaryotic translation initiation factor 3 (eIF-3) complex, which is involved in protein synthesis of a specialized repertoire of mRNAs and, together with other initiation factors, stimulates binding of mRNA and methionyl-tRNAi to the 40S ribosome. The eIF-3 complex specifically targets and initiates translation of a subset of mRNAs involved in cell proliferation. This Drosophila pseudoobscura pseudoobscura (Fruit fly) protein is Eukaryotic translation initiation factor 3 subunit B.